Here is a 545-residue protein sequence, read N- to C-terminus: Resolvase homolog YokA (545 aa).

One can recognise a Resolvase/invertase-type recombinase catalytic domain in the interval 14–165 (NILGYLRRSR…GAKYTYAAQG (152 aa)). Residues 19 to 46 (LRRSRQDMEREKRTGEDTLTEQKELMNK) adopt a coiled-coil conformation. Ser22 (O-(5'-phospho-DNA)-serine intermediate) is an active-site residue. The segment at residues 173 to 303 (PYGYQLNKKT…VKIANKVPLL (131 aa)) is a DNA-binding region (recombinase). A coiled-coil region spans residues 402-475 (NMKTKKQMSE…QDTQSEIDSN (74 aa)).

This sequence in the N-terminal section; belongs to the site-specific recombinase resolvase family.

This chain is Resolvase homolog YokA (yokA), found in Bacillus subtilis (strain 168).